Consider the following 75-residue polypeptide: Acylphosphatase-like protein MJ1405 (75 aa).

Residues 8–75 (TYEIIIYGRI…TNFWRVRKCK (68 aa)) form the Acylphosphatase-like domain.

This is Acylphosphatase-like protein MJ1405 from Methanocaldococcus jannaschii (strain ATCC 43067 / DSM 2661 / JAL-1 / JCM 10045 / NBRC 100440) (Methanococcus jannaschii).